The chain runs to 1237 residues: Putative structural protein VP3 (1237 aa).

A PPPDE domain is found at 963-1178 (GFLDKRVGDA…WDVSTAARMQ (216 aa)). Residues histidine 1001 and cysteine 1149 contribute to the active site.

The protein localises to the virion. This chain is Putative structural protein VP3 (S3), found in Lymantria dispar cypovirus 1 (isolate Rao) (LdCPV-1).